Consider the following 319-residue polypeptide: Ribonuclease Z (319 aa).

Residues His-62, His-64, Asp-66, His-67, His-145, Asp-215, and His-273 each contribute to the Zn(2+) site. The active-site Proton acceptor is Asp-66.

The protein belongs to the RNase Z family. Homodimer. Requires Zn(2+) as cofactor.

It carries out the reaction Endonucleolytic cleavage of RNA, removing extra 3' nucleotides from tRNA precursor, generating 3' termini of tRNAs. A 3'-hydroxy group is left at the tRNA terminus and a 5'-phosphoryl group is left at the trailer molecule.. Zinc phosphodiesterase, which displays some tRNA 3'-processing endonuclease activity. Probably involved in tRNA maturation, by removing a 3'-trailer from precursor tRNA. The polypeptide is Ribonuclease Z (Borrelia recurrentis (strain A1)).